The primary structure comprises 183 residues: Peptidyl-tRNA hydrolase (183 aa).

Tyr15 is a tRNA binding site. Catalysis depends on His20, which acts as the Proton acceptor. Positions 67 and 69 each coordinate tRNA.

The protein belongs to the PTH family. In terms of assembly, monomer.

The protein localises to the cytoplasm. It carries out the reaction an N-acyl-L-alpha-aminoacyl-tRNA + H2O = an N-acyl-L-amino acid + a tRNA + H(+). Its function is as follows. Hydrolyzes ribosome-free peptidyl-tRNAs (with 1 or more amino acids incorporated), which drop off the ribosome during protein synthesis, or as a result of ribosome stalling. In terms of biological role, catalyzes the release of premature peptidyl moieties from peptidyl-tRNA molecules trapped in stalled 50S ribosomal subunits, and thus maintains levels of free tRNAs and 50S ribosomes. The chain is Peptidyl-tRNA hydrolase from Chlamydia caviae (strain ATCC VR-813 / DSM 19441 / 03DC25 / GPIC) (Chlamydophila caviae).